Reading from the N-terminus, the 93-residue chain is Small ribosomal subunit protein bS20 (93 aa).

Belongs to the bacterial ribosomal protein bS20 family.

Its function is as follows. Binds directly to 16S ribosomal RNA. The polypeptide is Small ribosomal subunit protein bS20 (Dictyoglomus thermophilum (strain ATCC 35947 / DSM 3960 / H-6-12)).